The following is a 197-amino-acid chain: Putative rho GDP-dissociation inhibitor 1 (197 aa).

This sequence belongs to the Rho GDI family. Interacts with rac1A, rac1B, rac1C, racB, raCC and RacE.

It localises to the cytoplasm. In terms of biological role, regulates the GDP/GTP exchange reaction of the Rho proteins by inhibiting the dissociation of GDP from them, and the subsequent binding of GTP to them. Regulates the Rac-dependent signaling pathways controlling cytokinesis, actin reorganization and the contractile vacuole. Required for efficient accumulation of cap at the cell cortex. The chain is Putative rho GDP-dissociation inhibitor 1 (rdiA) from Dictyostelium discoideum (Social amoeba).